We begin with the raw amino-acid sequence, 197 residues long: Phosphoheptose isomerase (197 aa).

The SIS domain occupies 37–197 (MLQCLMNDGK…CIDSVLLEGM (161 aa)). 52–54 (NGG) contributes to the substrate binding site. 2 residues coordinate Zn(2+): His-61 and Glu-65. Substrate contacts are provided by residues Glu-65, 94–95 (ND), 120–122 (STS), Ser-125, and Gln-175. Gln-175 and His-183 together coordinate Zn(2+).

It belongs to the SIS family. GmhA subfamily. In terms of assembly, homotetramer. Zn(2+) is required as a cofactor.

It is found in the cytoplasm. It catalyses the reaction 2 D-sedoheptulose 7-phosphate = D-glycero-alpha-D-manno-heptose 7-phosphate + D-glycero-beta-D-manno-heptose 7-phosphate. Its pathway is carbohydrate biosynthesis; D-glycero-D-manno-heptose 7-phosphate biosynthesis; D-glycero-alpha-D-manno-heptose 7-phosphate and D-glycero-beta-D-manno-heptose 7-phosphate from sedoheptulose 7-phosphate: step 1/1. In terms of biological role, catalyzes the isomerization of sedoheptulose 7-phosphate in D-glycero-D-manno-heptose 7-phosphate. This chain is Phosphoheptose isomerase, found in Neisseria meningitidis serogroup C / serotype 2a (strain ATCC 700532 / DSM 15464 / FAM18).